Consider the following 88-residue polypeptide: MANSKSAKKRALQSEKRRQHNASRSSMLRTYVKKVIAAINAGDHESATAAFVTAQPIVDRMATKGLIHKNKAARYKSRLNAKIKALAA.

A compositionally biased stretch (basic residues) spans 1–21; that stretch reads MANSKSAKKRALQSEKRRQHN. Positions 1-27 are disordered; the sequence is MANSKSAKKRALQSEKRRQHNASRSSM.

This sequence belongs to the bacterial ribosomal protein bS20 family.

Functionally, binds directly to 16S ribosomal RNA. The protein is Small ribosomal subunit protein bS20 of Shewanella piezotolerans (strain WP3 / JCM 13877).